The following is a 902-amino-acid chain: Protein translocase subunit SecA (902 aa).

ATP contacts are provided by residues Gln87, 105 to 109, and Asp512; that span reads GEGKT. Residues 847 to 902 form a disordered region; that stretch reads DAERLARQQQLSHLDDQSAAAQEMASQTGDRKIGRNDPCPCGSGKKYKQCHGRLNA. Residues Cys885, Cys887, Cys896, and His897 each contribute to the Zn(2+) site. The span at 891 to 902 shows a compositional bias: basic residues; sequence KKYKQCHGRLNA.

This sequence belongs to the SecA family. In terms of assembly, monomer and homodimer. Part of the essential Sec protein translocation apparatus which comprises SecA, SecYEG and auxiliary proteins SecDF-YajC and YidC. It depends on Zn(2+) as a cofactor.

The protein resides in the cell inner membrane. It is found in the cytoplasm. It catalyses the reaction ATP + H2O + cellular proteinSide 1 = ADP + phosphate + cellular proteinSide 2.. In terms of biological role, part of the Sec protein translocase complex. Interacts with the SecYEG preprotein conducting channel. Has a central role in coupling the hydrolysis of ATP to the transfer of proteins into and across the cell membrane, serving both as a receptor for the preprotein-SecB complex and as an ATP-driven molecular motor driving the stepwise translocation of polypeptide chains across the membrane. The polypeptide is Protein translocase subunit SecA (Edwardsiella ictaluri (strain 93-146)).